The following is a 665-amino-acid chain: GRB2-associated-binding protein 2 (665 aa).

At serine 2 the chain carries Phosphoserine. The PH domain maps to 8 to 119; it reads DVVCTGWLRK…WVQSICQICG (112 aa). The segment at 131–184 is disordered; the sequence is RNLSSASHGPRSSPAEFSSSQHLLRERKSSAPSHSSQPTLFTFEPPVSSHMQPT. Phosphoserine occurs at positions 135, 142, 143, 149, 150, 160, 165, 211, 220, and 261. Residues 160–170 show a composition bias toward polar residues; sequence SAPSHSSQPTL. At threonine 262 the chain carries Phosphothreonine. Tyrosine 263 carries the phosphotyrosine modification. Residue threonine 275 is modified to Phosphothreonine. Residues serine 278 and serine 282 each carry the phosphoserine modification. The residue at position 284 (threonine 284) is a Phosphothreonine. Tyrosine 290 is subject to Phosphotyrosine. Threonine 328 carries the phosphothreonine modification. Residues 338–396 form a disordered region; it reads VATPGDSAIAPPPRPPKPSQAETSQWGSIQQRPPISENSRSVAATIPRRNTLPAMDNSR. An SH3-binding motif is present at residues 348 to 355; it reads PPPRPPKP. Polar residues predominate over residues 357–379; sequence QAETSQWGSIQQRPPISENSRSV. The residue at position 365 (serine 365) is a Phosphoserine. Phosphothreonine occurs at positions 382 and 388. Serine 402 bears the Phosphoserine mark. Threonine 405 carries the phosphothreonine modification. The tract at residues 408-445 is disordered; that stretch reads YPARGSGESASWSAEPPGKTAVGRSNSASSDDNYVPMN. Serine 420 bears the Phosphoserine mark. The span at 430–439 shows a compositional bias: polar residues; the sequence is GRSNSASSDD. At tyrosine 441 the chain carries Phosphotyrosine. Serine 469 carries the phosphoserine modification. The disordered stretch occupies residues 491-517; it reads PSRGSEIQPPPVNRNLKPDRKAKPTPL. The SH3-binding signature appears at 499–508; it reads PPPVNRNLKP. Position 532 is a phosphoserine (serine 532). Polar residues-rich tracts occupy residues 548–566 and 578–600; these read SSSQ…STDS and NPVS…STGS. 2 disordered regions span residues 548–632 and 646–665; these read SSSQ…KVDY and TMQE…GAKL. Serine 612 carries the phosphoserine modification. At tyrosine 632 the chain carries Phosphotyrosine. The span at 646–659 shows a compositional bias: polar residues; sequence TMQEWTDVRQSSEP.

This sequence belongs to the GAB family. As to quaternary structure, part of a complex composed of EEIG1, TNFRSF11A/RANK, PLCG2, GAB2, TEC and BTK; complex formation increases in the presence of TNFSF11/RANKL. Interacts with HCK. Interacts with SHC1; may mediate interaction with receptors. Interacts with SYK. Interacts with PI-3 kinase. Interacts with GRB2 (via SH3 2 domain). Interacts (phosphorylated) with PTPN11. Interacts with TNFRSF11A (via cytoplasmic domain). Interacts (phosphorylated) with 14-3-3 family proteins SFN, YWHAB, YWHAE, YWHAG, YWHAH, YWHAQ and YWHAZ; prevents interaction with GRB2 and attenuates GAB2 signaling. Phosphorylated upon EGF stimulation. Phosphorylated on tyrosine residues by HCK upon IL6 signaling. Phosphorylated on tyrosine residue(s) by the thrombopoietin receptor (TPOR), stem cell factor receptor (SCFR), and T-cell and B-cell antigen receptors, gp130, IL-2R and IL-3R. Phosphorylated upon stimulation of TNFRSF11A/RANK by TNFSF11/RANKL. In terms of processing, dephosphorylated by PTPN11. Ubiquitously expressed.

The protein localises to the cytoplasm. The protein resides in the cell membrane. It is found in the membrane raft. In terms of biological role, adapter protein which acts downstream of several membrane receptors including cytokine, antigen, hormone, cell matrix and growth factor receptors to regulate multiple signaling pathways. Regulates osteoclast differentiation mediating the TNFRSF11A/RANK signaling. In allergic response, it plays a role in mast cells activation and degranulation through PI-3-kinase regulation. Also involved in the regulation of cell proliferation and hematopoiesis. This Mus musculus (Mouse) protein is GRB2-associated-binding protein 2 (Gab2).